Here is a 262-residue protein sequence, read N- to C-terminus: Hydroxyethylthiazole kinase (262 aa).

Met40 contributes to the substrate binding site. The ATP site is built by Lys116 and Thr162. Gly189 contributes to the substrate binding site.

It belongs to the Thz kinase family. Requires Mg(2+) as cofactor.

It carries out the reaction 5-(2-hydroxyethyl)-4-methylthiazole + ATP = 4-methyl-5-(2-phosphooxyethyl)-thiazole + ADP + H(+). It functions in the pathway cofactor biosynthesis; thiamine diphosphate biosynthesis; 4-methyl-5-(2-phosphoethyl)-thiazole from 5-(2-hydroxyethyl)-4-methylthiazole: step 1/1. Catalyzes the phosphorylation of the hydroxyl group of 4-methyl-5-beta-hydroxyethylthiazole (THZ). The protein is Hydroxyethylthiazole kinase of Clostridioides difficile (strain 630) (Peptoclostridium difficile).